Reading from the N-terminus, the 365-residue chain is Mannose-1-phosphate guanylyltransferase catalytic subunit beta (365 aa).

The substrate-binding domain stretch occupies residues 2-221 (KALILVGGYG…PGFWMDVGQP (220 aa)). GDP-alpha-D-mannose is bound at residue D109. A Mg(2+)-binding site is contributed by D109. Residue K161 is part of the active site. Residue D217 coordinates GDP-alpha-D-mannose. Position 217 (D217) interacts with Mg(2+). Positions 244 to 365 (ETGSNIHPTA…VNVPSKDIIM (122 aa)) are hexapeptide repeat domain.

The protein belongs to the transferase hexapeptide repeat family. As to quaternary structure, component of the GMPPA-GMPPB mannose-1-phosphate guanylyltransferase complex composed of 4 GMPPA subunits and 8 tag-335/GMPPB subunits; the complex is organized into three layers, a central layer made up of 2 GMPPA dimers sandwiched between two layers each made up of 2 tag-335/GMPPB dimers. Catalytic activity of tag-335/GMPPB is reduced when part of the complex and binding of GDP-alpha-D-Mannose by GMPPA induces allosteric feedback inhibition of tag-335/GMPPB. Requires Mg(2+) as cofactor.

It carries out the reaction alpha-D-mannose 1-phosphate + GTP + H(+) = GDP-alpha-D-mannose + diphosphate. Its pathway is nucleotide-sugar biosynthesis; GDP-alpha-D-mannose biosynthesis; GDP-alpha-D-mannose from alpha-D-mannose 1-phosphate (GTP route): step 1/1. Enzyme activity is reduced by incorporation into the GMPPA-GMPPB mannose-1-phosphate guanylyltransferase complex. Allosterically inhibited, when part of the GMPPA-GMPPB complex, by GDP-alpha-D-mannose binding to GMPPA. Catalytic subunit of the GMPPA-GMPPB mannose-1-phosphate guanylyltransferase complex. Catalyzes the formation of GDP-mannose, an essential precursor of glycan moieties of glycoproteins and glycolipids. Can catalyze the reverse reaction in vitro. Together with GMPPA regulates GDP-alpha-D-mannose levels. In Caenorhabditis elegans, this protein is Mannose-1-phosphate guanylyltransferase catalytic subunit beta (tag-335).